Reading from the N-terminus, the 121-residue chain is MALNIENIIAEIKEATILELNDLVKAIEEEFGVTAAAPVAVAAAGGAAEEAKDSFDVELTSAGDKKVGVIKVVREITGLGLKEAKELVDGAPAMVKEGVATAEAEEIKAKLEEAGASVTLK.

It belongs to the bacterial ribosomal protein bL12 family. Homodimer. Part of the ribosomal stalk of the 50S ribosomal subunit. Forms a multimeric L10(L12)X complex, where L10 forms an elongated spine to which 2 to 4 L12 dimers bind in a sequential fashion. Binds GTP-bound translation factors.

Its function is as follows. Forms part of the ribosomal stalk which helps the ribosome interact with GTP-bound translation factors. Is thus essential for accurate translation. The sequence is that of Large ribosomal subunit protein bL12 from Streptococcus suis (strain 98HAH33).